The primary structure comprises 351 residues: L-threonine 3-dehydrogenase (351 aa).

Cys39 lines the Zn(2+) pocket. Residues Thr41 and His44 each act as charge relay system in the active site. 6 residues coordinate Zn(2+): His64, Glu65, Cys94, Cys97, Cys100, and Cys108. NAD(+) is bound by residues Ile176, Asp196, Arg201, 271-273 (LGI), and 295-296 (IY).

The protein belongs to the zinc-containing alcohol dehydrogenase family. As to quaternary structure, homotetramer. Zn(2+) is required as a cofactor.

Its subcellular location is the cytoplasm. It catalyses the reaction L-threonine + NAD(+) = (2S)-2-amino-3-oxobutanoate + NADH + H(+). It participates in amino-acid degradation; L-threonine degradation via oxydo-reductase pathway; glycine from L-threonine: step 1/2. In terms of biological role, catalyzes the NAD(+)-dependent oxidation of L-threonine to 2-amino-3-ketobutyrate. In Francisella philomiragia subsp. philomiragia (strain ATCC 25017 / CCUG 19701 / FSC 153 / O#319-036), this protein is L-threonine 3-dehydrogenase.